Consider the following 167-residue polypeptide: Signal peptidase complex catalytic subunit SEC11 (167 aa).

Topologically, residues 1–12 (MNIRHQLVQFLN) are cytoplasmic. Residues 13–30 (LALVLSSAFMAWKTLSVI) form a helical; Signal-anchor for type II membrane protein membrane-spanning segment. The Lumenal portion of the chain corresponds to 31–167 (TNSHSPIVVV…MGISSLLSNE (137 aa)). Residues serine 44, histidine 83, and aspartate 109 each act as charge relay system in the active site. The interval 153 to 164 (TLLGLMGISSLL) is C-terminal short (CTS) helix.

It belongs to the peptidase S26B family. In terms of assembly, component of the signal peptidase complex (SPC) composed of a catalytic subunit SEC11 and three accessory subunits SPC1, SPC2 and SPC3. The complex induces a local thinning of the ER membrane which is used to measure the length of the signal peptide (SP) h-region of protein substrates. This ensures the selectivity of the complex towards h-regions shorter than 18-20 amino acids. SPC associates with the translocon complex.

It is found in the endoplasmic reticulum membrane. The enzyme catalyses Cleavage of hydrophobic, N-terminal signal or leader sequences from secreted and periplasmic proteins.. In terms of biological role, catalytic component of the signal peptidase complex (SPC) which catalyzes the cleavage of N-terminal signal sequences from nascent proteins as they are translocated into the lumen of the endoplasmic reticulum. Specifically cleaves N-terminal signal peptides that contain a hydrophobic alpha-helix (h-region) shorter than 18-20 amino acids. This Debaryomyces hansenii (strain ATCC 36239 / CBS 767 / BCRC 21394 / JCM 1990 / NBRC 0083 / IGC 2968) (Yeast) protein is Signal peptidase complex catalytic subunit SEC11 (SEC11).